A 380-amino-acid chain; its full sequence is Zinc metalloproteinase-like protein nas-21 (380 aa).

Positions 1 to 24 are cleaved as a signal peptide; the sequence is MNYFITFFFMHIAVLNFYFRFSNG. The region spanning 46–234 is the Peptidase M12A domain; it reads QALRMDNEPR…LMINEYYQCS (189 aa). N-linked (GlcNAc...) asparagine glycosylation is present at N87. Disulfide bonds link C90/C233 and C110/C130. E138 is an active-site residue. 4 N-linked (GlcNAc...) asparagine glycosylation sites follow: N253, N269, N283, and N304.

Its subcellular location is the secreted. Its function is as follows. May lack metalloprotease activity. The protein is Zinc metalloproteinase-like protein nas-21 (nas-21) of Caenorhabditis elegans.